The chain runs to 300 residues: 33 kDa chaperonin (300 aa).

2 disulfides stabilise this stretch: cysteine 247-cysteine 249 and cysteine 280-cysteine 283.

Belongs to the HSP33 family. Post-translationally, under oxidizing conditions two disulfide bonds are formed involving the reactive cysteines. Under reducing conditions zinc is bound to the reactive cysteines and the protein is inactive.

It is found in the cytoplasm. Redox regulated molecular chaperone. Protects both thermally unfolding and oxidatively damaged proteins from irreversible aggregation. Plays an important role in the bacterial defense system toward oxidative stress. The chain is 33 kDa chaperonin from Prochlorococcus marinus subsp. pastoris (strain CCMP1986 / NIES-2087 / MED4).